Reading from the N-terminus, the 156-residue chain is Small ribosomal subunit protein uS7 (156 aa).

Belongs to the universal ribosomal protein uS7 family. Part of the 30S ribosomal subunit. Contacts proteins S9 and S11.

In terms of biological role, one of the primary rRNA binding proteins, it binds directly to 16S rRNA where it nucleates assembly of the head domain of the 30S subunit. Is located at the subunit interface close to the decoding center, probably blocks exit of the E-site tRNA. The polypeptide is Small ribosomal subunit protein uS7 (Pelagibacter ubique (strain HTCC1062)).